The primary structure comprises 523 residues: Maintenance of mitochondrial morphology protein 1 (523 aa).

Topologically, residues 1 to 43 are lumenal; that stretch reads MAGSTSASLQTPYFPSSTQINPVRVDHTLPLPPAQPSLSFTQG. Residues 44-64 traverse the membrane as a helical segment; sequence LLVGQLSVVLLIGAFIKFFIF. Residues 65–523 lie on the Cytoplasmic side of the membrane; sequence GEAPPPPSRG…GSMPDTVTET (459 aa). 4 disordered regions span residues 70 to 118, 295 to 349, 420 to 473, and 492 to 523; these read PPSR…SSST, TSDQ…SKHG, RTGL…IDRG, and GGHQ…VTET. 3 stretches are compositionally biased toward polar residues: residues 74-96, 105-118, and 295-312; these read GLSN…TDSS, STSN…SSST, and TSDQ…TTSE. One can recognise an SMP-LTD domain in the interval 151–412; the sequence is QPESLDWFNV…EPRVQVVGLP (262 aa). A compositionally biased stretch (gly residues) spans 449-467; the sequence is GVSGGGGSGGGSGGGGGSM.

It belongs to the MMM1 family. In terms of assembly, homodimer. Component of the ER-mitochondria encounter structure (ERMES) or MDM complex, composed of MMM1, MDM10, MDM12 and MDM34. An MMM1 homodimer associates with one molecule of MDM12 on each side in a pairwise head-to-tail manner, and the SMP-LTD domains of MMM1 and MDM12 generate a continuous hydrophobic tunnel for phospholipid trafficking.

The protein localises to the endoplasmic reticulum membrane. Component of the ERMES/MDM complex, which serves as a molecular tether to connect the endoplasmic reticulum (ER) and mitochondria. Components of this complex are involved in the control of mitochondrial shape and protein biogenesis, and function in nonvesicular lipid trafficking between the ER and mitochondria. The MDM12-MMM1 subcomplex functions in the major beta-barrel assembly pathway that is responsible for biogenesis of all outer membrane beta-barrel proteins, and acts in a late step after the SAM complex. The MDM10-MDM12-MMM1 subcomplex further acts in the TOM40-specific pathway after the action of the MDM12-MMM1 complex. Essential for establishing and maintaining the structure of mitochondria and maintenance of mtDNA nucleoids. This Paracoccidioides brasiliensis (strain Pb03) protein is Maintenance of mitochondrial morphology protein 1.